We begin with the raw amino-acid sequence, 27 residues long: Alpha-benincasin (27 aa).

Its function is as follows. Has weak antifungal activity toward C.comatus and P.piricola but not toward M.arachidicola. Inhibits cell-free translation in rabbit reticulocyte lysate system. This Benincasa hispida (Wax gourd) protein is Alpha-benincasin.